The following is a 29-amino-acid chain: Snake venom metalloproteinase bothrolysin (29 aa).

A Peptidase M12B domain is found at 6 to 29 (RYIELFLVVDSGMFMKYNGNSDKI). A Ca(2+)-binding site is contributed by Glu9.

This sequence belongs to the venom metalloproteinase (M12B) family. Zn(2+) is required as a cofactor. As to expression, expressed by the venom gland.

Its subcellular location is the secreted. The enzyme catalyses Cleavage of 4-Gln-|-His-5, 9-Ser-|-His-10 and 14-Ala-|-Leu-15 of insulin B chain and Pro-|-Phe of angiotensin I.. Snake venom zinc metalloproteinase that impairs hemostasis in the envenomed animal. The protein is Snake venom metalloproteinase bothrolysin of Bothrops jararaca (Jararaca).